We begin with the raw amino-acid sequence, 188 residues long: Elongation factor P (188 aa).

The protein belongs to the elongation factor P family.

Its subcellular location is the cytoplasm. The protein operates within protein biosynthesis; polypeptide chain elongation. Involved in peptide bond synthesis. Stimulates efficient translation and peptide-bond synthesis on native or reconstituted 70S ribosomes in vitro. Probably functions indirectly by altering the affinity of the ribosome for aminoacyl-tRNA, thus increasing their reactivity as acceptors for peptidyl transferase. The protein is Elongation factor P of Wolbachia sp. subsp. Brugia malayi (strain TRS).